The chain runs to 161 residues: Peroxynitrite isomerase 2 (161 aa).

Residues 17–23 (GTWAGQG) carry the GXWXGXG motif. Residue His152 participates in heme b binding.

The protein belongs to the nitrobindin family. As to quaternary structure, homodimer. It depends on heme b as a cofactor.

It carries out the reaction peroxynitrite = nitrate. It participates in nitrogen metabolism. Heme-binding protein able to scavenge peroxynitrite and to protect free L-tyrosine against peroxynitrite-mediated nitration, by acting as a peroxynitrite isomerase that converts peroxynitrite to nitrate. Therefore, this protein likely plays a role in peroxynitrite sensing and in the detoxification of reactive nitrogen and oxygen species (RNS and ROS, respectively). Is able to bind nitric oxide (NO) in vitro, but may act as a sensor of peroxynitrite levels in vivo. The polypeptide is Peroxynitrite isomerase 2 (Mycobacterium marinum (strain ATCC BAA-535 / M)).